A 688-amino-acid polypeptide reads, in one-letter code: Lipase (688 aa).

Residues 1-35 (MKTRQNKYSIRKFSVGASSILIAALLFMGGGSAQA) form the signal peptide. The disordered stretch occupies residues 31–309 (GSAQAAEQQQ…KSAKQKQYKN (279 aa)). Positions 36–302 (AEQQQDKGTV…KNEDQTNKSA (267 aa)) are cleaved as a propeptide — removed in mature form. A compositionally biased stretch (polar residues) spans 45-54 (VENSTTQSIG). The span at 68-79 (NKNVNEKSNVNS) shows a compositional bias: low complexity. Basic and acidic residues-rich tracts occupy residues 84-95 (ESLHNETPKNED) and 103-143 (SQND…KHAS). Residues 144–172 (ENNQTLHSKAAQSNEDVKTKPSQLDNTAA) are compositionally biased toward polar residues. Basic and acidic residues predominate over residues 173–183 (KQEDSQKENLS). A compositionally biased stretch (polar residues) spans 184–211 (KQDTQSSKTTDLLRATAQNQSKDSQSTE). Residues 240–267 (SKEEPLKVDKQANPTTDKDKSSKNDKGS) are compositionally biased toward basic and acidic residues. Residues 274 to 289 (LESNAVATTNKQSKQQ) show a composition bias toward polar residues. Catalysis depends on Ser418, which acts as the Nucleophile. The active-site Charge relay system is the Asp609. Asp647 is a binding site for Ca(2+). His648 serves as the catalytic Charge relay system. Ca(2+) contacts are provided by Asp650, Asp655, and Asp658.

The protein belongs to the AB hydrolase superfamily. Lipase family.

Its subcellular location is the secreted. It carries out the reaction a triacylglycerol + H2O = a diacylglycerol + a fatty acid + H(+). The protein is Lipase (lip) of Staphylococcus epidermidis (strain ATCC 12228 / FDA PCI 1200).